The primary structure comprises 430 residues: DNA repair protein recA homolog 3, mitochondrial (430 aa).

A mitochondrion-targeting transit peptide spans 1 to 35; the sequence is MARILRNVYSLRSSLFSSELLRRSVVGTSFQLRGF. 119-126 is a binding site for ATP; it reads GPEASGKT. The interval 385 to 415 is disordered; it reads DEAADKETESESEEEDSLRVVVSPDNTDDES.

Belongs to the RecA family.

The protein resides in the mitochondrion. In terms of biological role, involved in recombination ability and DNA strand transfer activity. The protein is DNA repair protein recA homolog 3, mitochondrial of Arabidopsis thaliana (Mouse-ear cress).